A 36-amino-acid polypeptide reads, in one-letter code: Photosystem II reaction center protein Psb30 (36 aa).

The chain crosses the membrane as a helical span at residues 8-28 (IIAQLTVVTLTLLAGPVIVFL).

Belongs to the Psb30/Ycf12 family. PSII is composed of 1 copy each of membrane proteins PsbA, PsbB, PsbC, PsbD, PsbE, PsbF, PsbH, PsbI, PsbJ, PsbK, PsbL, PsbM, PsbT, PsbX, PsbY, PsbZ, Psb30/Ycf12, peripheral proteins of the oxygen-evolving complex and a large number of cofactors. It forms dimeric complexes.

It is found in the plastid. The protein localises to the cyanelle thylakoid membrane. Functionally, a core subunit of photosystem II (PSII), probably helps stabilize the reaction center. This chain is Photosystem II reaction center protein Psb30, found in Cyanophora paradoxa.